The sequence spans 374 residues: MEGNNNNEIIEKEEDLFQNIIKSTTDNKQRFNLFTKEIQKQYELTLSSNENSVKGLDWIINTLKQAYTHQNSKDDKKRLLQWILKNLIIQVKSLRLKYSLINNTTDNNNNNNNENNNDNNIDTVKEKRLINKLWEYQVQIIIRLEYLNLKEDLFPTTVSKGDDDDNNSGNQSSIDNLVSLLQDASFLMDSTSIISEGTTTTTNNNNNNNNNNNNNNNNGTNITTDSVRNKGCTDFLDKVILKRFLNLRKVLTKIYGSLEISKPLELKKDKNKFNNNNNKGNLKDLIVPTKENIESTLSINLDEVSDCNDINTNLKKKRKQQEQLQIEKEKKLLTIQQEQTKIPKDLFKKVNVKKLNHFTMSLSNPEKSFKTIKM.

The segment at 197-223 (GTTTTTNNNNNNNNNNNNNNNNGTNIT) is disordered. Positions 198–223 (TTTTTNNNNNNNNNNNNNNNNGTNIT) are enriched in low complexity. Residues 302–342 (DEVSDCNDINTNLKKKRKQQEQLQIEKEKKLLTIQQEQTKI) adopt a coiled-coil conformation.

This is an uncharacterized protein from Dictyostelium discoideum (Social amoeba).